Here is a 485-residue protein sequence, read N- to C-terminus: MDLTKLTAHELKDMLSNKEVKAEEITKAFLDRINLVDNKLGAYLYVSEEEAIKKAKEIDVKIEKNEELKALSGIPVGIKDNINVKGMQNTCASKILEGYTSPYDAHVTEKIKQEEGIILGKLNMDEFAMGSSTENSAFKLAKNPWDLERVPGGSSGGSAVAVAGSEATLSLGTDTGGSVRQPASFCGVVGLKPTYGRISRSGVVAFGSTLDQVGPMGKDVEDCALLTSAIAGLDKKDFTTADKEVPDYKKSLTKDIKGKRIGIPKEFFGDGLDKNVRKSVEEAIKVLEANGAEVKPCSLPLMDYALSAYYIISSAEASSNLARFDGIRYGYRSKNFKDAKDIYLKSRSEGFGDEVKRRIMLGTYVLSAGYYDAYYKKALKVRKLIKDDFQRVFKEFDAIVSPTSPTTAFKVGEKKDDVMSMYLSDIYTVPISVAGVPAISLPCGMVDGLPVGLQIISDYFKEDVLFNLAYNYEQSVDFHKMRADF.

Catalysis depends on charge relay system residues Lys-79 and Ser-154. Ser-178 functions as the Acyl-ester intermediate in the catalytic mechanism.

This sequence belongs to the amidase family. GatA subfamily. Heterotrimer of A, B and C subunits.

It catalyses the reaction L-glutamyl-tRNA(Gln) + L-glutamine + ATP + H2O = L-glutaminyl-tRNA(Gln) + L-glutamate + ADP + phosphate + H(+). Functionally, allows the formation of correctly charged Gln-tRNA(Gln) through the transamidation of misacylated Glu-tRNA(Gln) in organisms which lack glutaminyl-tRNA synthetase. The reaction takes place in the presence of glutamine and ATP through an activated gamma-phospho-Glu-tRNA(Gln). This Clostridium botulinum (strain Langeland / NCTC 10281 / Type F) protein is Glutamyl-tRNA(Gln) amidotransferase subunit A.